The sequence spans 282 residues: Putative dolichyldiphosphatase (282 aa).

The next 2 helical transmembrane spans lie at 26-46 and 93-113; these read LLCA…ATLI and MPSS…LFLL. The interval 121–153 is disordered; it reads QQQQQQQKQKQRERKKQVTNVKTTTTNGSGNGS. Over residues 138–148 the composition is skewed to low complexity; sequence VTNVKTTTTNG. 2 helical membrane-spanning segments follow: residues 173–193 and 207–227; these read WSFA…GAVA and VLVG…VTHV.

It belongs to the dolichyldiphosphatase family.

It localises to the endoplasmic reticulum membrane. The catalysed reaction is a di-trans,poly-cis-dolichyl diphosphate + H2O = a di-trans,poly-cis-dolichyl phosphate + phosphate + H(+). It functions in the pathway protein modification; protein glycosylation. This is Putative dolichyldiphosphatase from Neurospora crassa (strain ATCC 24698 / 74-OR23-1A / CBS 708.71 / DSM 1257 / FGSC 987).